The sequence spans 163 residues: 3-hydroxyacyl-[acyl-carrier-protein] dehydratase FabZ (163 aa).

Histidine 58 is a catalytic residue.

Belongs to the thioester dehydratase family. FabZ subfamily.

It localises to the cytoplasm. The enzyme catalyses a (3R)-hydroxyacyl-[ACP] = a (2E)-enoyl-[ACP] + H2O. Involved in unsaturated fatty acids biosynthesis. Catalyzes the dehydration of short chain beta-hydroxyacyl-ACPs and long chain saturated and unsaturated beta-hydroxyacyl-ACPs. The sequence is that of 3-hydroxyacyl-[acyl-carrier-protein] dehydratase FabZ from Francisella tularensis subsp. tularensis (strain FSC 198).